The primary structure comprises 1129 residues: Phytochrome A type 3 (1129 aa).

A compositionally biased stretch (low complexity) spans 1 to 21 (MSSSRPASSSSSRNRQSSQAR). Positions 1–24 (MSSSRPASSSSSRNRQSSQARVLA) are disordered. The GAF domain occupies 217-402 (SMEVLCNTVV…VFAVHVNREF (186 aa)). Phytochromobilin is bound at residue C322. PAS domains follow at residues 618 to 688 (VTSE…LQGK) and 748 to 822 (VEGD…VSLC). In terms of domain architecture, Histidine kinase spans 902–1122 (YMRHAINNPL…TFIITAELAS (221 aa)).

Belongs to the phytochrome family. Homodimer. Post-translationally, contains one covalently linked phytochromobilin chromophore.

Functionally, regulatory photoreceptor which exists in two forms that are reversibly interconvertible by light: the Pr form that absorbs maximally in the red region of the spectrum and the Pfr form that absorbs maximally in the far-red region. Photoconversion of Pr to Pfr induces an array of morphogenic responses, whereas reconversion of Pfr to Pr cancels the induction of those responses. Pfr controls the expression of a number of nuclear genes including those encoding the small subunit of ribulose-bisphosphate carboxylase, chlorophyll A/B binding protein, protochlorophyllide reductase, rRNA, etc. It also controls the expression of its own gene(s) in a negative feedback fashion. This Avena sativa (Oat) protein is Phytochrome A type 3 (PHYA3).